The sequence spans 110 residues: uncharacterized protein (110 aa).

Helical transmembrane passes span 5-25, 62-82, and 90-110; these read ILAI…PIHL, FPII…AIVS, and GISI…LISI.

This sequence to A.fulgidus AF1754.

It is found in the cell membrane. This is an uncharacterized protein from Methanocaldococcus jannaschii (strain ATCC 43067 / DSM 2661 / JAL-1 / JCM 10045 / NBRC 100440) (Methanococcus jannaschii).